The chain runs to 179 residues: Large ribosomal subunit protein uL6 (179 aa).

Belongs to the universal ribosomal protein uL6 family. Part of the 50S ribosomal subunit.

This protein binds to the 23S rRNA, and is important in its secondary structure. It is located near the subunit interface in the base of the L7/L12 stalk, and near the tRNA binding site of the peptidyltransferase center. This Syntrophus aciditrophicus (strain SB) protein is Large ribosomal subunit protein uL6.